We begin with the raw amino-acid sequence, 591 residues long: Adenine deaminase (591 aa).

This sequence belongs to the metallo-dependent hydrolases superfamily. Adenine deaminase family. Homodimer. Mn(2+) is required as a cofactor.

It catalyses the reaction adenine + H2O + H(+) = hypoxanthine + NH4(+). This Edwardsiella ictaluri (strain 93-146) protein is Adenine deaminase.